The following is an 878-amino-acid chain: MNGNEIRKRFVAFFQQHGHTHVESSSLVPRNDPTLLFTNAGMVQFKSLFLGEERRDYSRAVSAQKCVRAGGKHNDLENVGRTARHHTFFEMLGNFSFGDYFKEEAIRLGWRFVTEDLGIDAQRLLVTVYSEDDEAYAIWTQQIGLPADKVIRIPTTDNFWSMGDTGPCGPCSEIFYDYGDTVAGGPPGSEDEDGDRFVEIWNLVFMQYDRSSDGTLTPLPKPSIDTGAGLERLASVLQGKTNNYDTDLFQPLIKAAAALAGVDDTTCSAEQLVSLRVIADHIRSVSFLIADGVLPSNEGRGYVLRRIMRRGMRHGRLLGLEQPFMHKLVETLGALMGDTYPELTAQRKTLAMVIETEEKRFAATLGTGLKHLEEAVAGLRMGDVLDGKTLFTLYDTFGFPLDLTADILRDREIGVDQEGFSACMKEQRERARAAWSGSGEASLGALYHPLLERVGASEFLGYVHESASASVVALIKNGAEVESLTAGDEGSVVCNQTPFYGESGGQVGDRGVIQLANGARFTVTDTQKPLPDLIVHHGKMVTGTVHLGDHAELQVDGATRQAIRLHHSATHLMHHALRAVLGEHVKQAGSHVSAERLRLDFSHFQGMSEEELRAVEDRVNGAILSNVSQETAVMTPQEAVAAGAMALFGEKYGDEVRVVRIGDSMELCGGTHVSRSGDMGIFHILSESAVAAGVRRLEAVCGGRARAIFRGDQEALKAAAALLKTQPNKLAEGIERLLGKQKELEKSLEKLQSAQAGGMVEALLEQAVEVGGIKLLAVEVKGVDGKALREMVDQVKDKLGSGVILLALGGDKVSLVAGVTKDLAGKRVKAGDLMAFAAAMVGGKGGGRPDMAQGGGTEVAAIPTMLTAIPGWLQEQLG.

Residues H567, H571, C668, and H672 each coordinate Zn(2+).

This sequence belongs to the class-II aminoacyl-tRNA synthetase family. Zn(2+) serves as cofactor.

The protein resides in the cytoplasm. The enzyme catalyses tRNA(Ala) + L-alanine + ATP = L-alanyl-tRNA(Ala) + AMP + diphosphate. Catalyzes the attachment of alanine to tRNA(Ala) in a two-step reaction: alanine is first activated by ATP to form Ala-AMP and then transferred to the acceptor end of tRNA(Ala). Also edits incorrectly charged Ser-tRNA(Ala) and Gly-tRNA(Ala) via its editing domain. This Magnetococcus marinus (strain ATCC BAA-1437 / JCM 17883 / MC-1) protein is Alanine--tRNA ligase.